We begin with the raw amino-acid sequence, 345 residues long: Methylthioribose-1-phosphate isomerase (345 aa).

Substrate contacts are provided by residues 47-49 (RGA), R90, and Q199. Catalysis depends on D240, which acts as the Proton donor. 250–251 (NK) is a binding site for substrate.

This sequence belongs to the eIF-2B alpha/beta/delta subunits family. MtnA subfamily.

It catalyses the reaction 5-(methylsulfanyl)-alpha-D-ribose 1-phosphate = 5-(methylsulfanyl)-D-ribulose 1-phosphate. The protein operates within amino-acid biosynthesis; L-methionine biosynthesis via salvage pathway; L-methionine from S-methyl-5-thio-alpha-D-ribose 1-phosphate: step 1/6. Catalyzes the interconversion of methylthioribose-1-phosphate (MTR-1-P) into methylthioribulose-1-phosphate (MTRu-1-P). This chain is Methylthioribose-1-phosphate isomerase, found in Crocosphaera subtropica (strain ATCC 51142 / BH68) (Cyanothece sp. (strain ATCC 51142)).